The following is a 319-amino-acid chain: Beta-ketoacyl-[acyl-carrier-protein] synthase III (319 aa).

Active-site residues include Cys115 and His246. Residues 247–251 are ACP-binding; sequence QANLR. Asn276 is an active-site residue.

The protein belongs to the thiolase-like superfamily. FabH family. As to quaternary structure, homodimer.

It localises to the cytoplasm. It carries out the reaction malonyl-[ACP] + acetyl-CoA + H(+) = 3-oxobutanoyl-[ACP] + CO2 + CoA. Its pathway is lipid metabolism; fatty acid biosynthesis. Its function is as follows. Catalyzes the condensation reaction of fatty acid synthesis by the addition to an acyl acceptor of two carbons from malonyl-ACP. Catalyzes the first condensation reaction which initiates fatty acid synthesis and may therefore play a role in governing the total rate of fatty acid production. Possesses both acetoacetyl-ACP synthase and acetyl transacylase activities. Its substrate specificity determines the biosynthesis of branched-chain and/or straight-chain of fatty acids. The chain is Beta-ketoacyl-[acyl-carrier-protein] synthase III from Coxiella burnetii (strain CbuK_Q154) (Coxiella burnetii (strain Q154)).